The following is a 30-amino-acid chain: Glutathione S-transferase (30 aa).

This sequence belongs to the GST superfamily. Monomer and homodimer.

Its subcellular location is the cytoplasm. It carries out the reaction RX + glutathione = an S-substituted glutathione + a halide anion + H(+). Its function is as follows. Conjugation of reduced glutathione to a wide number of exogenous and endogenous hydrophobic electrophiles. The chain is Glutathione S-transferase from Pseudomonas fluorescens.